The chain runs to 371 residues: Anhydro-N-acetylmuramic acid kinase (371 aa).

An ATP-binding site is contributed by 12-20 (GTVLDGNID).

It belongs to the anhydro-N-acetylmuramic acid kinase family.

The catalysed reaction is 1,6-anhydro-N-acetyl-beta-muramate + ATP + H2O = N-acetyl-D-muramate 6-phosphate + ADP + H(+). It participates in amino-sugar metabolism; 1,6-anhydro-N-acetylmuramate degradation. The protein operates within cell wall biogenesis; peptidoglycan recycling. Catalyzes the specific phosphorylation of 1,6-anhydro-N-acetylmuramic acid (anhMurNAc) with the simultaneous cleavage of the 1,6-anhydro ring, generating MurNAc-6-P. Is required for the utilization of anhMurNAc either imported from the medium or derived from its own cell wall murein, and thus plays a role in cell wall recycling. In Mesorhizobium japonicum (strain LMG 29417 / CECT 9101 / MAFF 303099) (Mesorhizobium loti (strain MAFF 303099)), this protein is Anhydro-N-acetylmuramic acid kinase.